Consider the following 171-residue polypeptide: MSKKSGLSFLWLSAVAFVVDLLTKYIVVQKFDLYESVNVLPVFNLTYVRNYGAAFSFLADHSGWQQYFFILLALAISGMLVYFLAKNNAEQKIQNSAYALIIGGALANMVDRAYNGFVVDFFDFYWDIYHYPVFNIADIAICIGAGLLALDAFKSEKKKVQDKQVEKCGQK.

3 helical membrane-spanning segments follow: residues 8–28, 64–84, and 99–119; these read SFLW…YIVV, WQQY…VYFL, and ALII…GFVV. Catalysis depends on residues Asp120 and Asp138. Residues 133–153 form a helical membrane-spanning segment; the sequence is VFNIADIAICIGAGLLALDAF.

Belongs to the peptidase A8 family.

The protein resides in the cell inner membrane. The enzyme catalyses Release of signal peptides from bacterial membrane prolipoproteins. Hydrolyzes -Xaa-Yaa-Zaa-|-(S,diacylglyceryl)Cys-, in which Xaa is hydrophobic (preferably Leu), and Yaa (Ala or Ser) and Zaa (Gly or Ala) have small, neutral side chains.. The protein operates within protein modification; lipoprotein biosynthesis (signal peptide cleavage). Functionally, this protein specifically catalyzes the removal of signal peptides from prolipoproteins. The protein is Lipoprotein signal peptidase of Haemophilus influenzae (strain PittGG).